The sequence spans 695 residues: WD repeat-containing protein 93 (695 aa).

The segment at 1-35 is disordered; sequence MSSFKGNQAQKRRLSVFPKGPLEIPSPTEADWPKD. One copy of the WD repeat lies at 421–460; sequence PCAAPIVMSQISSFSSYLALVCEDGVLILWDLAEGFLFGV.

In terms of tissue distribution, testis-specific. Expressed in spermatogonia, spermatocytes and spermatids.

The sequence is that of WD repeat-containing protein 93 (Wdr93) from Mus musculus (Mouse).